A 30-amino-acid polypeptide reads, in one-letter code: Antifungal protein Lap (30 aa).

Functionally, displays antifungal activity against M.arachidicola and P.piricola, but not against R.solani, C.gossypii and C.comatus. Inhibits mycelial growth in P.piricola with an IC(50) of 70 nM. Displays very low cell-free translation inhibitory activity in a rabbit reticulocyte lysate system (IC(50)=70 uM) but is able to inhibit HIV-1 reverse transcriptase activity (IC(50)=5.2 nM). The chain is Antifungal protein Lap from Lyophyllum shimeji (Hon-shimeji).